The following is a 375-amino-acid chain: tRNA(Met) cytidine acetate ligase (375 aa).

Residues 7 to 20, G101, N151, and R176 each bind ATP; that span reads VVEY…HRYH.

This sequence belongs to the TmcAL family.

The protein localises to the cytoplasm. It catalyses the reaction cytidine(34) in elongator tRNA(Met) + acetate + ATP = N(4)-acetylcytidine(34) in elongator tRNA(Met) + AMP + diphosphate. Functionally, catalyzes the formation of N(4)-acetylcytidine (ac(4)C) at the wobble position of elongator tRNA(Met), using acetate and ATP as substrates. First activates an acetate ion to form acetyladenylate (Ac-AMP) and then transfers the acetyl group to tRNA to form ac(4)C34. The sequence is that of tRNA(Met) cytidine acetate ligase from Limosilactobacillus fermentum (strain NBRC 3956 / LMG 18251) (Lactobacillus fermentum).